We begin with the raw amino-acid sequence, 319 residues long: Chromoplast-specific carotenoid-associated protein C1, chromoplastic (319 aa).

Residues 1-55 (MTSIAFWNAFTVNPFPAAARRSPPPLTPFTSGALSPARKPRILEISHPRTLPSFR) constitute a chromoplast transit peptide.

It belongs to the PAP/fibrillin family. As to expression, expressed in flower buds and floral lip tissues. Not detected in roots and leaves. Specifically expressed in conical papillate cells of adaxial epidermis of lip tissues.

The protein resides in the plastid. It localises to the chromoplast. May be involved in carotenoid sequestration within chromoplasts. This is Chromoplast-specific carotenoid-associated protein C1, chromoplastic (CHRC1) from Oncidium hybrid cultivar (Orchid).